The following is a 175-amino-acid chain: Ribosome-binding factor A (175 aa).

The interval 131-175 is disordered; that stretch reads KPAGEADPYRDRGSVDEPSDAGGLVIRTSDGLEAENTGDDYQAED. Residues 162–175 are compositionally biased toward acidic residues; that stretch reads LEAENTGDDYQAED.

The protein belongs to the RbfA family. Monomer. Binds 30S ribosomal subunits, but not 50S ribosomal subunits or 70S ribosomes.

Its subcellular location is the cytoplasm. Its function is as follows. One of several proteins that assist in the late maturation steps of the functional core of the 30S ribosomal subunit. Associates with free 30S ribosomal subunits (but not with 30S subunits that are part of 70S ribosomes or polysomes). Required for efficient processing of 16S rRNA. May interact with the 5'-terminal helix region of 16S rRNA. The protein is Ribosome-binding factor A of Mycobacterium ulcerans (strain Agy99).